A 196-amino-acid polypeptide reads, in one-letter code: Charged multivesicular body protein 1a (196 aa).

Residues 5–41 (LFQLKFTAKQLEKLAKKAEKDSNTEQAKVKKALQQKN) adopt a coiled-coil conformation. The segment covering 170–181 (QGASSVGESSTR) has biased composition (polar residues). The tract at residues 170-196 (QGASSVGESSTRTQEDQLSRRLASLRN) is disordered. The MIT-interacting motif motif lies at 185–195 (DQLSRRLASLR).

This sequence belongs to the SNF7 family. As to quaternary structure, probable peripherally associated component of the endosomal sorting required for transport complex III (ESCRT-III).

It localises to the cytoplasm. Its subcellular location is the endosome membrane. Probable peripherally associated component of the endosomal sorting required for transport complex III (ESCRT-III) which is involved in multivesicular bodies (MVBs) formation and sorting of endosomal cargo proteins into MVBs. MVBs contain intraluminal vesicles (ILVs) that are generated by invagination and scission from the limiting membrane of the endosome and mostly are delivered to lysosomes enabling degradation of membrane proteins, such as stimulated growth factor receptors, lysosomal enzymes and lipids. This chain is Charged multivesicular body protein 1a (chmp1a), found in Xenopus laevis (African clawed frog).